The chain runs to 227 residues: H-N-H endonuclease F-TflIV (227 aa).

Endonuclease that introduces double-strand break into pseudo palindromic 17 bp DNA sequence yielding 1 bp extensions with 3'-overhangs. This is H-N-H endonuclease F-TflIV from Escherichia phage T5 (Enterobacteria phage T5).